We begin with the raw amino-acid sequence, 420 residues long: Coiled-coil domain-containing protein 85C (420 aa).

Ala-2 bears the N-acetylalanine mark. 2 coiled-coil regions span residues 26–92 (ELLR…RELC) and 122–165 (HEVA…LAAA). A disordered region spans residues 165–271 (AGGAGGGGGG…NGLHDPSSTY (107 aa)). The segment covering 166-176 (GGAGGGGGGAG) has biased composition (gly residues). Ser-179 carries the post-translational modification Phosphoserine. Positions 185–212 (ASLSGPLAGSAAGSGARDVGDGSSTSSA) are enriched in low complexity. Ser-247 carries the post-translational modification Phosphoserine.

It belongs to the CCDC85 family. In terms of assembly, may interact with ARVCF, CTNND1, CTNND2 and PKP4. In terms of tissue distribution, predominantly expressed on the surface of the lateral ventricular walls of the developing cerebral cortex.

Its subcellular location is the cell junction. The protein localises to the tight junction. It localises to the adherens junction. May play a role in cell-cell adhesion and epithelium development through its interaction with proteins of the beta-catenin family. May play an important role in cortical development, especially in the maintenance of radial glia. This chain is Coiled-coil domain-containing protein 85C (Ccdc85c), found in Mus musculus (Mouse).